Reading from the N-terminus, the 415-residue chain is Phosphoglycerate transport system transcriptional regulatory protein PgtA (415 aa).

Residues 7–121 enclose the Response regulatory domain; that stretch reads SILLIDDDVD…KLLILIEDAL (115 aa). Asp56 is modified (4-aspartylphosphate). The 200-residue stretch at 142–341 folds into the Sigma-54 factor interaction domain; the sequence is LIGRSEWMNQ…LANAAELFAV (200 aa). An ATP-binding site is contributed by 170-177; it reads GEHGTGRM. The segment at residues 385–404 is a DNA-binding region (H-T-H motif); sequence INEVAEYLQIPRKKLYLRMK.

In terms of processing, phosphorylated by PgtB.

It is found in the cytoplasm. Member of the two-component regulatory system PgtB/PgtA that regulates the inducible phosphoglycerate transport system. When activated by PgtB it acts in conjunction with sigma-54 as a transcriptional activator. The protein is Phosphoglycerate transport system transcriptional regulatory protein PgtA (pgtA) of Salmonella typhimurium (strain LT2 / SGSC1412 / ATCC 700720).